We begin with the raw amino-acid sequence, 402 residues long: MKIAVAGSGYVGLSLGVLLSLQNEVTIVDILPSKVDKINNGLSPIQDEYIEYYLKSKQLSIKATLDSKAAYKEAELVIIATPTNYNSRINYFDTQHVETVIKEVLSVNSHATLIIKSTIPIGFITEMRQKFQTDRIIFSPEFLRESKALYDNLYPSRIIVSCEENDSPKVKADAEKFALLLKSAAKKNNVPVLIMGASEAEAVKLFANTYLALRVAYFNELDTYAESRKLNSHMIIQGISYDDRIGMHYNNPSFGYGGYCLPKDTKQLLANYNNIPQTLIEAIVSSNNVRKSYIAKQIINVLKEQESPVKVVGVYRLIMKSNSDNFRESAIKDVIDILKSKDIKIIIYEPMLNKLESEDQSVLVNDLENFKKQANIIVTNRYDNELQDVKNKVYSRDIFGRD.

NAD(+)-binding positions include 2-19, valine 11, aspartate 29, lysine 34, threonine 83, threonine 118, and glutamate 145; that span reads KIAV…GVLL. Substrate is bound by residues 141 to 145, lysine 204, asparagine 208, 249 to 253, and glycine 257; these read EFLRE and YNNPS. Position 259 (tyrosine 259) interacts with NAD(+). Cysteine 260 acts as the Nucleophile in catalysis. Lysine 263 serves as a coordination point for NAD(+). Lysine 320 is a binding site for substrate. Arginine 327 serves as a coordination point for NAD(+).

The protein belongs to the UDP-glucose/GDP-mannose dehydrogenase family.

It catalyses the reaction UDP-alpha-D-glucose + 2 NAD(+) + H2O = UDP-alpha-D-glucuronate + 2 NADH + 3 H(+). It functions in the pathway nucleotide-sugar biosynthesis; UDP-alpha-D-glucuronate biosynthesis; UDP-alpha-D-glucuronate from UDP-alpha-D-glucose: step 1/1. Its function is as follows. Catalyzes the formation of UDP-glucuronic acid which is required for capsular hyaluronic acid synthesis. The polypeptide is UDP-glucose 6-dehydrogenase (hasB) (Streptococcus pyogenes serotype M18 (strain MGAS8232)).